The chain runs to 182 residues: Ribulose bisphosphate carboxylase small subunit, chloroplastic (182 aa).

A chloroplast-targeting transit peptide spans 1 to 58; that stretch reads MASSMISSATIATVNCSSPAQANMVAPFTGLKSASAFPVTRKANNDITSLASNGGRVQ.

Belongs to the RuBisCO small chain family. As to quaternary structure, heterohexadecamer of 8 large and 8 small subunits.

The protein resides in the plastid. The protein localises to the chloroplast. Functionally, ruBisCO catalyzes two reactions: the carboxylation of D-ribulose 1,5-bisphosphate, the primary event in carbon dioxide fixation, as well as the oxidative fragmentation of the pentose substrate. Both reactions occur simultaneously and in competition at the same active site. Although the small subunit is not catalytic it is essential for maximal activity. This chain is Ribulose bisphosphate carboxylase small subunit, chloroplastic, found in Gossypium hirsutum (Upland cotton).